Here is a 445-residue protein sequence, read N- to C-terminus: MEKTQIQQLVKQFPLVQELIELNPVTWFNPRATTLQAGLPFVGLDAADVADAEQRLARFAPYLSAAFPETRAANGVIESEVVALPAMQTALDQRYGLSLAGRLLLKKDSHLPISGSIKARGGIYEVLAHAEKLALAAGLLQLTDDYAKLFSAEFREFFGGYRIAVGSTGNLGMSIGIISARLGFSVSVHMSADAREWKKQKLRDNGVNVVEYEQDYGVAVEQGRLQAASDPRCFFIDDENSQTLFLGYAVAGGRLRRQFAESGVQVDAQHPLFVYLPCGVGGGPGGVAFGLKLAFGDHVHCIFAEPTHSPCMLLGVHTGLHDGIAVQDLGIDNQTAADGLAVGRASGFVGRAMERLLSGFYTLSDREMFALLGLLDSHEHIQLEPSALAGMPGPWRVTADTEWLAAQGLNEQQMKNATHLVWATGGGMVPEAEMAKYLANARQSI.

Lys118 bears the N6-(pyridoxal phosphate)lysine mark.

The protein belongs to the serine/threonine dehydratase family. DsdA subfamily. As to quaternary structure, monomer. The cofactor is pyridoxal 5'-phosphate.

The enzyme catalyses D-serine = pyruvate + NH4(+). In Serratia proteamaculans (strain 568), this protein is D-serine dehydratase.